Reading from the N-terminus, the 171-residue chain is Ribosome maturation factor RimM (171 aa).

Residues 97-170 enclose the PRC barrel domain; that stretch reads EGEYYYHEII…LVTIHVMEGL (74 aa).

This sequence belongs to the RimM family. In terms of assembly, binds ribosomal protein uS19.

It is found in the cytoplasm. Functionally, an accessory protein needed during the final step in the assembly of 30S ribosomal subunit, possibly for assembly of the head region. Essential for efficient processing of 16S rRNA. May be needed both before and after RbfA during the maturation of 16S rRNA. It has affinity for free ribosomal 30S subunits but not for 70S ribosomes. The polypeptide is Ribosome maturation factor RimM (Bacillus cereus (strain ATCC 14579 / DSM 31 / CCUG 7414 / JCM 2152 / NBRC 15305 / NCIMB 9373 / NCTC 2599 / NRRL B-3711)).